Here is a 149-residue protein sequence, read N- to C-terminus: Nucleoside diphosphate kinase (149 aa).

ATP-binding residues include Lys9, Phe57, Arg85, Thr91, Arg102, and Asn112. The Pros-phosphohistidine intermediate role is filled by His115.

This sequence belongs to the NDK family. In terms of assembly, homotetramer. Requires Mg(2+) as cofactor.

The protein localises to the cytoplasm. It carries out the reaction a 2'-deoxyribonucleoside 5'-diphosphate + ATP = a 2'-deoxyribonucleoside 5'-triphosphate + ADP. The enzyme catalyses a ribonucleoside 5'-diphosphate + ATP = a ribonucleoside 5'-triphosphate + ADP. Its function is as follows. Major role in the synthesis of nucleoside triphosphates other than ATP. The ATP gamma phosphate is transferred to the NDP beta phosphate via a ping-pong mechanism, using a phosphorylated active-site intermediate. The protein is Nucleoside diphosphate kinase of Gloeobacter violaceus (strain ATCC 29082 / PCC 7421).